The primary structure comprises 494 residues: MNRRLPLKLKELSECFRTQTLDPVSATEQILQLANRLQHLNAFIRTSPEKALAQAEKSSTRHKTGKPLSLLDGAPIAVKDNFCTKGIHTTCAARMLENFVPTYNATVYERLARNGAILVGKTNMDQYGMGSGTVDSIFGPTKNYWDAVEGESDFRIAGGSSGGSAVAVASGICFAALGSDTGGSTRNPASYCGVVGFKPTYGLLSRYGLIPLVNSMDVPGILTRTVDDCLAVFNAIAGPDDRDSTTIKTFFKPISLPDASKICLKGLKVGIPIEYHCEGLSDEVLTTWTKVADMLEDAGASVHPVSLPYTSASIFVYSILNQCEVASNMARYDGIEFGHRSDEDASTEQLYAKSRAEGFNGVVKNRILSGNFFLLRKNYDKYFEKALKVRRLIANDFDRAFQEVDILLTPTTLSDAPRYSEFIQSNNRDQCAVQDFCTQPANMGGIPALSLPIRLSEQRLPISLQLMAPNFSEKRLFKVAKWIEEQVKFETNYN.

Active-site charge relay system residues include lysine 79 and serine 160. Catalysis depends on serine 184, which acts as the Acyl-ester intermediate.

It belongs to the amidase family. GatA subfamily. In terms of assembly, subunit of the heterotrimeric GatCAB amidotransferase (AdT) complex, composed of A, B and C subunits.

It localises to the mitochondrion. The catalysed reaction is L-glutamyl-tRNA(Gln) + L-glutamine + ATP + H2O = L-glutaminyl-tRNA(Gln) + L-glutamate + ADP + phosphate + H(+). Allows the formation of correctly charged Gln-tRNA(Gln) through the transamidation of misacylated Glu-tRNA(Gln) in the mitochondria. The reaction takes place in the presence of glutamine and ATP through an activated gamma-phospho-Glu-tRNA(Gln). The protein is Glutamyl-tRNA(Gln) amidotransferase subunit A, mitochondrial of Aedes aegypti (Yellowfever mosquito).